Reading from the N-terminus, the 296-residue chain is Claudin-23 (296 aa).

Over 1-2 (MR) the chain is Cytoplasmic. The chain crosses the membrane as a helical span at residues 3-23 (TPVVMTLGMVLTPCGLLLNLV). Topologically, residues 24 to 81 (STLAPGWRLVKGFLDQPVDVVLYQGLWDICREQSSRERECGQPDEWNYFQTQPVQVAR) are extracellular. A helical transmembrane segment spans residues 82–102 (GLMITSLATTALGLLLASLGV). Over 103–111 (RCWQDEPHY) the chain is Cytoplasmic. A helical transmembrane segment spans residues 112–132 (GLAGLSGVVFFVAGLFSLIPV). Over 133–160 (SWYNHFLSDPDVLAAPSSPVTVQVSYSL) the chain is Extracellular. The helical transmembrane segment at 161 to 181 (VLGYLGSCLLLLGGFSLALSF) threads the bilayer. Topologically, residues 182-296 (APWCEERCRR…QNSLPCDSDL (115 aa)) are cytoplasmic. The interval 224–296 (YSDGQHRPPP…QNSLPCDSDL (73 aa)) is disordered. Low complexity predominate over residues 273 to 284 (TSQGGSSSRSTR). Over residues 285–296 (PCQNSLPCDSDL) the composition is skewed to polar residues.

The protein belongs to the claudin family.

It localises to the cell junction. Its subcellular location is the tight junction. It is found in the cell membrane. Plays a major role in tight junction-specific obliteration of the intercellular space, through calcium-independent cell-adhesion activity. The protein is Claudin-23 (Cldn23) of Mus musculus (Mouse).